Consider the following 131-residue polypeptide: Sulfurtransferase TusD (131 aa).

Catalysis depends on C81, which acts as the Cysteine persulfide intermediate.

This sequence belongs to the DsrE/TusD family. As to quaternary structure, heterohexamer, formed by a dimer of trimers. The hexameric TusBCD complex contains 2 copies each of TusB, TusC and TusD. The TusBCD complex interacts with TusE.

The protein localises to the cytoplasm. Part of a sulfur-relay system required for 2-thiolation of 5-methylaminomethyl-2-thiouridine (mnm(5)s(2)U) at tRNA wobble positions. Accepts sulfur from TusA and transfers it in turn to TusE. The sequence is that of Sulfurtransferase TusD from Yersinia pseudotuberculosis serotype O:1b (strain IP 31758).